The primary structure comprises 320 residues: Annexin A5 (320 aa).

At A2 the chain carries N-acetylalanine. Annexin repeat units lie at residues 15 to 86, 87 to 158, 170 to 242, and 246 to 317; these read FDER…ALMK, PSRL…VLLQ, AQVE…AVVK, and SIPA…LLCG. K29 participates in a covalent cross-link: Glycyl lysine isopeptide (Lys-Gly) (interchain with G-Cter in SUMO1); alternate. K29 participates in a covalent cross-link: Glycyl lysine isopeptide (Lys-Gly) (interchain with G-Cter in SUMO2); alternate. Residue S37 is modified to Phosphoserine. Residues K70, K76, K79, K97, and K101 each carry the N6-acetyllysine modification. K290 is modified (N6-succinyllysine). The [IL]-x-C-x-x-[DE] motif signature appears at 314-319; it reads LLCGED.

Belongs to the annexin family. In terms of assembly, monomer. Binds ATRX and EIF5B. Interacts with hepatitis B virus (HBV). In terms of processing, S-nitrosylation is induced by interferon-gamma and oxidatively-modified low-densitity lipoprotein (LDL(ox)) possibly implicating the iNOS-S100A8/9 transnitrosylase complex.

Its function is as follows. This protein is an anticoagulant protein that acts as an indirect inhibitor of the thromboplastin-specific complex, which is involved in the blood coagulation cascade. The chain is Annexin A5 (ANXA5) from Homo sapiens (Human).